A 128-amino-acid polypeptide reads, in one-letter code: Small ribosomal subunit protein uS12 (128 aa).

Residues Met1 to Glu25 are disordered. Asp89 is modified (3-methylthioaspartic acid). Residues Ser101–Lys128 are disordered.

This sequence belongs to the universal ribosomal protein uS12 family. As to quaternary structure, part of the 30S ribosomal subunit. Contacts proteins S8 and S17. May interact with IF1 in the 30S initiation complex.

With S4 and S5 plays an important role in translational accuracy. Its function is as follows. Interacts with and stabilizes bases of the 16S rRNA that are involved in tRNA selection in the A site and with the mRNA backbone. Located at the interface of the 30S and 50S subunits, it traverses the body of the 30S subunit contacting proteins on the other side and probably holding the rRNA structure together. The combined cluster of proteins S8, S12 and S17 appears to hold together the shoulder and platform of the 30S subunit. In Chlorobium phaeobacteroides (strain BS1), this protein is Small ribosomal subunit protein uS12.